The sequence spans 697 residues: Polyribonucleotide nucleotidyltransferase (697 aa).

D489 and D495 together coordinate Mg(2+). Residues 556-615 form the KH domain; it reads PRIETIKIKPDKIREVIGSGGKVIRGITEATGVKIEIQDDGTINIASADPEATKKAIAMI. The 69-residue stretch at 625–693 folds into the S1 motif domain; the sequence is GKTYKGRIVK…RSGRVKLSRK (69 aa).

The protein belongs to the polyribonucleotide nucleotidyltransferase family. Mg(2+) serves as cofactor.

The protein localises to the cytoplasm. The catalysed reaction is RNA(n+1) + phosphate = RNA(n) + a ribonucleoside 5'-diphosphate. In terms of biological role, involved in mRNA degradation. Catalyzes the phosphorolysis of single-stranded polyribonucleotides processively in the 3'- to 5'-direction. In Bdellovibrio bacteriovorus (strain ATCC 15356 / DSM 50701 / NCIMB 9529 / HD100), this protein is Polyribonucleotide nucleotidyltransferase.